We begin with the raw amino-acid sequence, 81 residues long: Putative defensin-like protein 148 (81 aa).

Positions 1–24 are cleaved as a signal peptide; that stretch reads MIKSFQLSFTVLIVFTVLILGVVG. 4 disulfides stabilise this stretch: C34–C80, C43–C63, C48–C74, and C52–C76.

The protein belongs to the DEFL family.

Its subcellular location is the secreted. The polypeptide is Putative defensin-like protein 148 (LCR4) (Arabidopsis thaliana (Mouse-ear cress)).